The sequence spans 136 residues: Transcription antitermination protein NusB (136 aa).

It belongs to the NusB family.

Functionally, involved in transcription antitermination. Required for transcription of ribosomal RNA (rRNA) genes. Binds specifically to the boxA antiterminator sequence of the ribosomal RNA (rrn) operons. This Kineococcus radiotolerans (strain ATCC BAA-149 / DSM 14245 / SRS30216) protein is Transcription antitermination protein NusB.